Here is a 320-residue protein sequence, read N- to C-terminus: o-succinylbenzoate synthase (320 aa).

Catalysis depends on Lys-133, which acts as the Proton donor. 3 residues coordinate Mg(2+): Asp-161, Glu-190, and Asp-213. The active-site Proton acceptor is the Lys-235.

The protein belongs to the mandelate racemase/muconate lactonizing enzyme family. MenC type 1 subfamily. Requires a divalent metal cation as cofactor.

The catalysed reaction is (1R,6R)-6-hydroxy-2-succinyl-cyclohexa-2,4-diene-1-carboxylate = 2-succinylbenzoate + H2O. Its pathway is quinol/quinone metabolism; 1,4-dihydroxy-2-naphthoate biosynthesis; 1,4-dihydroxy-2-naphthoate from chorismate: step 4/7. It functions in the pathway quinol/quinone metabolism; menaquinone biosynthesis. Its function is as follows. Converts 2-succinyl-6-hydroxy-2,4-cyclohexadiene-1-carboxylate (SHCHC) to 2-succinylbenzoate (OSB). This is o-succinylbenzoate synthase from Escherichia coli (strain K12 / MC4100 / BW2952).